Reading from the N-terminus, the 274-residue chain is Undecaprenyl-diphosphatase (274 aa).

The next 8 helical transmembrane spans lie at 6-26 (SLFI…LPVS), 45-65 (AKTF…VMFW), 94-114 (GHIL…HDVI), 117-137 (LFAP…LLAA), 155-174 (YRQA…PGFS), 191-211 (YAAA…ASGL), 223-243 (GDLP…LIAI), and 253-273 (ISFV…YMVF).

The protein belongs to the UppP family.

The protein resides in the cell inner membrane. It catalyses the reaction di-trans,octa-cis-undecaprenyl diphosphate + H2O = di-trans,octa-cis-undecaprenyl phosphate + phosphate + H(+). Catalyzes the dephosphorylation of undecaprenyl diphosphate (UPP). Confers resistance to bacitracin. This chain is Undecaprenyl-diphosphatase, found in Serratia proteamaculans (strain 568).